A 292-amino-acid chain; its full sequence is UPF0725 protein At4g28920 (292 aa).

Residues 1–17 show a composition bias toward acidic residues; it reads MSENDSSESDIEMDPEE. The interval 1–24 is disordered; sequence MSENDSSESDIEMDPEEEKVYRRQ.

Belongs to the UPF0725 (EMB2204) family.

This Arabidopsis thaliana (Mouse-ear cress) protein is UPF0725 protein At4g28920.